The primary structure comprises 224 residues: uncharacterized protein (224 aa).

Residues 21–41 (LTVILIIPIVYLGVCGCFEIV) traverse the membrane as a helical segment.

It localises to the membrane. This is an uncharacterized protein from Methanocaldococcus jannaschii (strain ATCC 43067 / DSM 2661 / JAL-1 / JCM 10045 / NBRC 100440) (Methanococcus jannaschii).